Here is a 356-residue protein sequence, read N- to C-terminus: Guanine nucleotide-binding protein alpha-15 subunit (356 aa).

Gly-2 carries the N-myristoyl glycine lipid modification. A lipid anchor (S-palmitoyl cysteine) is attached at Cys-5. One can recognise a G-alpha domain in the interval 33 to 356 (GNQKLLLLGT…GRNLRGTGME (324 aa)). The segment at 36 to 49 (KLLLLGTGECGKST) is G1 motif. GTP contacts are provided by residues 41–48 (GTGECGKS), 177–183 (LRIRIPT), 202–206 (DVGGQ), 271–274 (NKRD), and Ala-328. Mg(2+) contacts are provided by Ser-48 and Thr-183. The tract at residues 175 to 183 (DMLRIRIPT) is G2 motif. Residues 198 to 207 (FRIFDVGGQR) are G3 motif. Residues 267 to 274 (ILFLNKRD) form a G4 motif region. Residues 326–331 (TCATDT) form a G5 motif region.

This sequence belongs to the G-alpha family. In terms of assembly, g proteins are composed of 3 units; alpha, beta and gamma. The alpha chain contains the guanine nucleotide binding site.

Functionally, guanine nucleotide-binding proteins (G proteins) are involved as modulators or transducers in various transmembrane signaling systems. The chain is Guanine nucleotide-binding protein alpha-15 subunit (gpa-15) from Caenorhabditis briggsae.